The primary structure comprises 286 residues: Polyamine aminopropyltransferase (286 aa).

Residues 9–242 (NGWIDEHHQG…GWWSWTFAAI (234 aa)) enclose the PABS domain. Position 36 (Gln-36) interacts with S-methyl-5'-thioadenosine. Spermidine is bound by residues His-67 and Asp-91. Residues Glu-111 and 143–144 (NG) each bind S-methyl-5'-thioadenosine. Residue Asp-162 is the Proton acceptor of the active site. Pro-169 is a binding site for S-methyl-5'-thioadenosine.

Belongs to the spermidine/spermine synthase family. Homodimer or homotetramer.

It localises to the cytoplasm. It catalyses the reaction S-adenosyl 3-(methylsulfanyl)propylamine + putrescine = S-methyl-5'-thioadenosine + spermidine + H(+). The protein operates within amine and polyamine biosynthesis; spermidine biosynthesis; spermidine from putrescine: step 1/1. Catalyzes the irreversible transfer of a propylamine group from the amino donor S-adenosylmethioninamine (decarboxy-AdoMet) to putrescine (1,4-diaminobutane) to yield spermidine. The protein is Polyamine aminopropyltransferase of Prochlorococcus marinus (strain MIT 9313).